We begin with the raw amino-acid sequence, 268 residues long: N-formylmaleamate deformylase (268 aa).

One can recognise an AB hydrolase-1 domain in the interval 28–251; the sequence is ALILVPGITS…NAGHMIPWDD (224 aa). Residues serine 101, glutamate 221, and histidine 245 each act as charge relay system in the active site.

The enzyme catalyses N-formylmaleamate + H2O = maleamate + formate + H(+). It participates in cofactor degradation; nicotinate degradation. In terms of biological role, deformylase that catalyzes the conversion of N-formylmaleamic acid to maleamate in the aerobic nicotinate degradation pathway. In Pseudomonas putida (strain ATCC 47054 / DSM 6125 / CFBP 8728 / NCIMB 11950 / KT2440), this protein is N-formylmaleamate deformylase (nicD).